The following is a 97-amino-acid chain: Aspartyl/glutamyl-tRNA(Asn/Gln) amidotransferase subunit C (97 aa).

This sequence belongs to the GatC family. In terms of assembly, heterotrimer of A, B and C subunits.

The catalysed reaction is L-glutamyl-tRNA(Gln) + L-glutamine + ATP + H2O = L-glutaminyl-tRNA(Gln) + L-glutamate + ADP + phosphate + H(+). It catalyses the reaction L-aspartyl-tRNA(Asn) + L-glutamine + ATP + H2O = L-asparaginyl-tRNA(Asn) + L-glutamate + ADP + phosphate + 2 H(+). Functionally, allows the formation of correctly charged Asn-tRNA(Asn) or Gln-tRNA(Gln) through the transamidation of misacylated Asp-tRNA(Asn) or Glu-tRNA(Gln) in organisms which lack either or both of asparaginyl-tRNA or glutaminyl-tRNA synthetases. The reaction takes place in the presence of glutamine and ATP through an activated phospho-Asp-tRNA(Asn) or phospho-Glu-tRNA(Gln). This Prochlorococcus marinus (strain MIT 9313) protein is Aspartyl/glutamyl-tRNA(Asn/Gln) amidotransferase subunit C.